Reading from the N-terminus, the 434-residue chain is Serine hydroxymethyltransferase (434 aa).

(6S)-5,6,7,8-tetrahydrofolate contacts are provided by residues leucine 128 and 132 to 134 (GHL). Lysine 237 is modified (N6-(pyridoxal phosphate)lysine).

Belongs to the SHMT family. Homodimer. It depends on pyridoxal 5'-phosphate as a cofactor.

It localises to the cytoplasm. The catalysed reaction is (6R)-5,10-methylene-5,6,7,8-tetrahydrofolate + glycine + H2O = (6S)-5,6,7,8-tetrahydrofolate + L-serine. It participates in one-carbon metabolism; tetrahydrofolate interconversion. It functions in the pathway amino-acid biosynthesis; glycine biosynthesis; glycine from L-serine: step 1/1. Catalyzes the reversible interconversion of serine and glycine with tetrahydrofolate (THF) serving as the one-carbon carrier. This reaction serves as the major source of one-carbon groups required for the biosynthesis of purines, thymidylate, methionine, and other important biomolecules. Also exhibits THF-independent aldolase activity toward beta-hydroxyamino acids, producing glycine and aldehydes, via a retro-aldol mechanism. This Corynebacterium glutamicum (strain R) protein is Serine hydroxymethyltransferase.